Consider the following 219-residue polypeptide: Chloramphenicol acetyltransferase (219 aa).

His193 acts as the Proton acceptor in catalysis.

This sequence belongs to the chloramphenicol acetyltransferase family.

The enzyme catalyses chloramphenicol + acetyl-CoA = chloramphenicol 3-acetate + CoA. This enzyme is an effector of chloramphenicol resistance in bacteria. This is Chloramphenicol acetyltransferase (cat) from Acinetobacter calcoaceticus subsp. anitratus.